A 227-amino-acid polypeptide reads, in one-letter code: N-acetyltransferase family 8 member 7 (227 aa).

The next 2 helical transmembrane spans lie at 36–56 (MLLLPRTLLLLLGVPLTLFLA) and 58–78 (GSWLLVLLSILTLFLSLWFLA). Residues 61–220 (LLVLLSILTL…PMINLKYSLT (160 aa)) form the N-acetyltransferase domain.

It belongs to the camello family.

Its subcellular location is the membrane. It carries out the reaction L-lysyl-[protein] + acetyl-CoA = N(6)-acetyl-L-lysyl-[protein] + CoA + H(+). Its function is as follows. Has histone acetyltransferase activity in vitro, with specificity for histone H4. This is N-acetyltransferase family 8 member 7 from Mus musculus (Mouse).